The chain runs to 438 residues: Histidinol dehydrogenase (438 aa).

Y137, Q198, and N221 together coordinate NAD(+). The substrate site is built by S244, Q266, and H269. Q266 and H269 together coordinate Zn(2+). Catalysis depends on proton acceptor residues E334 and H335. 4 residues coordinate substrate: H335, D368, E422, and H427. D368 contributes to the Zn(2+) binding site. Position 427 (H427) interacts with Zn(2+).

It belongs to the histidinol dehydrogenase family. Requires Zn(2+) as cofactor.

The enzyme catalyses L-histidinol + 2 NAD(+) + H2O = L-histidine + 2 NADH + 3 H(+). It participates in amino-acid biosynthesis; L-histidine biosynthesis; L-histidine from 5-phospho-alpha-D-ribose 1-diphosphate: step 9/9. Functionally, catalyzes the sequential NAD-dependent oxidations of L-histidinol to L-histidinaldehyde and then to L-histidine. The protein is Histidinol dehydrogenase of Aromatoleum aromaticum (strain DSM 19018 / LMG 30748 / EbN1) (Azoarcus sp. (strain EbN1)).